The following is a 194-amino-acid chain: uncharacterized protein (194 aa).

2 consecutive CBS domains span residues 13 to 72 and 78 to 133; these read MSFP…PKDV and MSKK…LLEI. In terms of domain architecture, ACP-type MB spans 159 to 192; the sequence is YINGICENCGYQGRVRLYQGRYLCDECIEEFEEK. Fe cation contacts are provided by Cys164, Cys167, Cys182, and Cys185. 4 residues coordinate Zn(2+): Cys164, Cys167, Cys182, and Cys185.

This is an uncharacterized protein from Methanocaldococcus jannaschii (strain ATCC 43067 / DSM 2661 / JAL-1 / JCM 10045 / NBRC 100440) (Methanococcus jannaschii).